The following is a 331-amino-acid chain: Ferredoxin--NADP reductase (331 aa).

FAD contacts are provided by Thr-20, Glu-39, Gln-47, Tyr-52, Val-92, Phe-126, Asp-287, and Ser-328.

The protein belongs to the ferredoxin--NADP reductase type 2 family. In terms of assembly, homodimer. The cofactor is FAD.

It carries out the reaction 2 reduced [2Fe-2S]-[ferredoxin] + NADP(+) + H(+) = 2 oxidized [2Fe-2S]-[ferredoxin] + NADPH. In Bacillus cereus (strain ZK / E33L), this protein is Ferredoxin--NADP reductase.